The primary structure comprises 1645 residues: Histone-lysine N-methyltransferase set-26 (1645 aa).

Disordered stretches follow at residues 1–82 (MADG…QQIP), 109–132 (EPAA…RPTE), 200–228 (DAVG…SVAP), 417–606 (TPEQ…VLRP), and 651–789 (TGQS…DEAA). 2 stretches are compositionally biased toward low complexity: residues 16-31 (EQPP…AEPI) and 67-82 (QEFY…QQIP). The span at 207-228 (PGTQYRRNQQTGGGLPSTSVAP) shows a compositional bias: polar residues. Composition is skewed to low complexity over residues 429–443 (RQRA…AAQR) and 453–467 (RPGA…PSMA). Positions 559-578 (MTQEEKNAHFARLTTDKEKP) are enriched in basic and acidic residues. A compositionally biased stretch (pro residues) spans 592-603 (PHVPPPPPPPLV). Residues 651-675 (TGQSGSSAAARQRTVSGSAARAQTY) show a composition bias toward polar residues. 2 stretches are compositionally biased toward basic residues: residues 684–699 (QHHH…RHSS) and 731–741 (HRPRGRPKGTR). Residues 780-789 (SESEGIDEAA) are compositionally biased toward acidic residues. The PHD-type zinc finger occupies 794–842 (TMRCHCGMDHGDGDTIECEGCKTWQHMACMGLTLKSNTSKYKCEMCLPR). The tract at residues 865–904 (AAKKQKRKSEPVEQKQKSQPSTSRKSAPMALQQQPAEPRV) is disordered. Positions 881–899 (KSQPSTSRKSAPMALQQQP) are enriched in polar residues. One can recognise an SET domain in the interval 973 to 1064 (MSNEVKRQPG…RNTEVTLPFD (92 aa)). Residues 1099 to 1172 (RHRAMDHKKR…EAKERKKMEV (74 aa)) show a composition bias toward basic and acidic residues. Disordered regions lie at residues 1099 to 1333 (RHRA…SKNV), 1371 to 1536 (SGLL…STEG), and 1548 to 1645 (PLDD…TRWN). Positions 1103-1217 (MDHKKREAEE…GKRKEARRRS (115 aa)) form a coiled coil. Low complexity predominate over residues 1173 to 1183 (EASAAAAPESS). The span at 1188–1210 (AREERRIQQAEEMFRRQEEEGKR) shows a compositional bias: basic and acidic residues. Polar residues-rich tracts occupy residues 1258–1268 (TTQPSTSSFAT) and 1300–1311 (TVATPKDTTASN). Composition is skewed to basic and acidic residues over residues 1382-1427 (SEVR…KKAN), 1434-1450 (KSEK…EKKP), and 1468-1485 (KKTE…ESSS). A compositionally biased stretch (polar residues) spans 1554–1565 (SSSNTAPTTTIA).

This sequence belongs to the class V-like SAM-binding methyltransferase superfamily. Expressed both in the germline and in somatic tissues.

It localises to the nucleus. It carries out the reaction L-lysyl(9)-[histone H3] + 3 S-adenosyl-L-methionine = N(6),N(6),N(6)-trimethyl-L-lysyl(9)-[histone H3] + 3 S-adenosyl-L-homocysteine + 3 H(+). In terms of biological role, histone methyltransferase that mediates trimethylation of 'Lys-9' of histone H3 in vitro. Involved in transcriptional regulation. Plays a role in the negative regulation of lifespan and in heat resistance. Together with set-9, negatively regulates lifespan in a germline-independent, partially daf-16-dependent fashion. Together with set-9, plays a role in germline development and maintenance and might play a role in the restriction of the trimethylation mark on histone H3 'Lys-4'(H3K4me3) to target genes specifically in the germline. Together with spr-5, required for transgenerational fertility. This chain is Histone-lysine N-methyltransferase set-26, found in Caenorhabditis elegans.